The following is a 122-amino-acid chain: Large ribosomal subunit protein uL18 (122 aa).

Belongs to the universal ribosomal protein uL18 family. Part of the 50S ribosomal subunit; part of the 5S rRNA/L5/L18/L25 subcomplex. Contacts the 5S and 23S rRNAs.

Functionally, this is one of the proteins that bind and probably mediate the attachment of the 5S RNA into the large ribosomal subunit, where it forms part of the central protuberance. This Leptospira biflexa serovar Patoc (strain Patoc 1 / Ames) protein is Large ribosomal subunit protein uL18.